The primary structure comprises 335 residues: Cytoskeleton protein RodZ (335 aa).

Over 1-111 (MNTEATHDQN…LGKRRKKRDG (111 aa)) the chain is Cytoplasmic. Positions 19–71 (LRNAREQLGLSQQAVAERLCLKVSTVRDIEEDKAPADLASTFLRGYIRSYARL) constitute an HTH cro/C1-type domain. The H-T-H motif DNA-binding region spans 30 to 49 (QQAVAERLCLKVSTVRDIEE). Residues 112–132 (WLMTFTWLVLFVVIGLSGAWW) form a helical; Signal-anchor for type II membrane protein membrane-spanning segment. Topologically, residues 133–335 (WQDHKAQQEE…TLNAEQSPAQ (203 aa)) are periplasmic. Polar residues predominate over residues 148–164 (DQSSAELNNNQSQSVPL). Residues 148–244 (DQSSAELNNN…PLPTDQAGVT (97 aa)) form a disordered region. Low complexity-rich tracts occupy residues 165 to 205 (DTST…DPQQ) and 217 to 239 (DTAATPAPAATTTPDGAAPLPTD).

The protein belongs to the RodZ family.

Its subcellular location is the cell inner membrane. Cytoskeletal protein that is involved in cell-shape control through regulation of the length of the long axis. The chain is Cytoskeleton protein RodZ from Escherichia coli O127:H6 (strain E2348/69 / EPEC).